Reading from the N-terminus, the 74-residue chain is UPF0346 protein PEPE_1063 (74 aa).

It belongs to the UPF0346 family.

In Pediococcus pentosaceus (strain ATCC 25745 / CCUG 21536 / LMG 10740 / 183-1w), this protein is UPF0346 protein PEPE_1063.